The sequence spans 145 residues: Fluoride-specific ion channel FluC 2 (145 aa).

Helical transmembrane passes span 16–36 (MLLV…LSAA), 42–62 (VISV…GWLL), 80–100 (LFAG…AVDT), and 113–133 (ILYA…GIAL). 2 residues coordinate Na(+): glycine 88 and threonine 91.

It belongs to the fluoride channel Fluc/FEX (TC 1.A.43) family.

The protein localises to the cell membrane. It catalyses the reaction fluoride(in) = fluoride(out). With respect to regulation, na(+) is not transported, but it plays an essential structural role and its presence is essential for fluoride channel function. Functionally, fluoride-specific ion channel. Important for reducing fluoride concentration in the cell, thus reducing its toxicity. This chain is Fluoride-specific ion channel FluC 2, found in Leifsonia xyli subsp. xyli (strain CTCB07).